A 1087-amino-acid chain; its full sequence is Period circadian protein (1087 aa).

Residues 1 to 14 (MEGESTESTHNTKV) show a composition bias toward polar residues. Disordered regions lie at residues 1–98 (MEGE…EQTE) and 123–153 (GAPT…QAEQ). Residues 15–46 (SDSAYSNSCSNSQSQRSGSSKSRLSGSHSSGS) are compositionally biased toward low complexity. Positions 65–78 (KRNKDKSRKKKKAK) match the Nuclear localization signal motif. A compositionally biased stretch (basic residues) spans 65–78 (KRNKDKSRKKKKAK). Over residues 79–93 (SPAQATAATTTTIKS) the composition is skewed to low complexity. Residues 129–140 (DAHDAHGDKPQL) show a composition bias toward basic and acidic residues. Acidic residues predominate over residues 141–150 (DVDEQQDDPQ). 2 consecutive PAS domains span residues 220-355 (DSFC…ATPI) and 373-479 (FAIQ…RVFQ). 4 disordered regions span residues 613–692 (PVTA…NPLP), 736–759 (MPEY…WEGD), 871–893 (SSAS…QPEA), and 956–1087 (TTTQ…HGDG). Over residues 655-664 (NLTTASNVRM) the composition is skewed to polar residues. Residues 665-689 (SSVTNTSNTGTGTSGGENSASGSSN) are compositionally biased toward low complexity. 2 stretches are compositionally biased toward polar residues: residues 877-892 (QHSP…SQPE) and 1003-1024 (LPST…NNPK). A compositionally biased stretch (low complexity) spans 1028–1047 (DSNGNSDDMDGSSFSSFYSS). Residues 1060–1087 (DNEKETKVHKLKPIVEHPEEDQTQHGDG) show a composition bias toward basic and acidic residues.

As to quaternary structure, forms a heterodimer with timeless (TIM); the complex then translocates into the nucleus. Post-translationally, phosphorylated with a circadian rhythmicity, probably by the double-time protein (dbt). Phosphorylation could be implicated in the stability of per monomer and in the formation of heterodimer per-tim.

It is found in the nucleus. Its subcellular location is the cytoplasm. The protein localises to the perinuclear region. Functionally, essential for biological clock functions. Determines the period length of circadian and ultradian rhythms; an increase in PER dosage leads to shortened circadian rhythms and a decrease leads to lengthened circadian rhythms. Essential for the circadian rhythmicity of locomotor activity, eclosion behavior, and for the rhythmic component of the male courtship song that originates in the thoracic nervous system. The biological cycle depends on the rhythmic formation and nuclear localization of the TIM-PER complex. Light induces the degradation of TIM, which promotes elimination of PER. Nuclear activity of the heterodimer coordinatively regulates PER and TIM transcription through a negative feedback loop. Behaves as a negative element in circadian transcriptional loop. Does not appear to bind DNA, suggesting indirect transcriptional inhibition. This is Period circadian protein (per) from Drosophila virilis (Fruit fly).